Reading from the N-terminus, the 238-residue chain is 3-dehydroquinate dehydratase (238 aa).

Residues 35–37 (ELR) and arginine 68 contribute to the 3-dehydroquinate site. Catalysis depends on histidine 131, which acts as the Proton donor/acceptor. The active-site Schiff-base intermediate with substrate is lysine 158. The 3-dehydroquinate site is built by arginine 200 and glutamine 223.

Belongs to the type-I 3-dehydroquinase family. Homodimer.

The enzyme catalyses 3-dehydroquinate = 3-dehydroshikimate + H2O. It functions in the pathway metabolic intermediate biosynthesis; chorismate biosynthesis; chorismate from D-erythrose 4-phosphate and phosphoenolpyruvate: step 3/7. In terms of biological role, involved in the third step of the chorismate pathway, which leads to the biosynthesis of aromatic amino acids. Catalyzes the cis-dehydration of 3-dehydroquinate (DHQ) and introduces the first double bond of the aromatic ring to yield 3-dehydroshikimate. This Staphylococcus epidermidis (strain ATCC 35984 / DSM 28319 / BCRC 17069 / CCUG 31568 / BM 3577 / RP62A) protein is 3-dehydroquinate dehydratase.